Reading from the N-terminus, the 370-residue chain is MGNIFGHLFRVTTFGESHGGGVGVIIDGCPPKLEINVKEIQYELDRRRPGQSKITTPRKESDTCEILSGVFEGQTLGTPIMIWVRNKDARPQDYQDMAIKYRPSHADATYDAKYGIRNWQGGGRSSARETIGRVASGAIAKKILQQYSGVEIVGYVKRIKNLEAIVDPTTVTMEQVESNIVRCPDSECAEKMIELVEKIRDLGDSVGGVVECIVRNVPKGLGSPVFDKLEADLAKGVMSLPATKGFEIGSGFAGTTMTGSEHNDELYTDKLGEIRTVTNRSGGIQGGISNGENIVLRVAFKPTATIRKEQRTVSRQGEETFLAAKGRHDPCVLPRAVPMVEAMVAIVLCDHLLRHYGQCNTLKSENVYGN.

R47 contacts NADP(+). FMN contacts are provided by residues 124–126 (RSS), G286, 301–305 (KPTAT), and R327.

Belongs to the chorismate synthase family. As to quaternary structure, homotetramer. It depends on FMNH2 as a cofactor.

The catalysed reaction is 5-O-(1-carboxyvinyl)-3-phosphoshikimate = chorismate + phosphate. It participates in metabolic intermediate biosynthesis; chorismate biosynthesis; chorismate from D-erythrose 4-phosphate and phosphoenolpyruvate: step 7/7. Catalyzes the anti-1,4-elimination of the C-3 phosphate and the C-6 proR hydrogen from 5-enolpyruvylshikimate-3-phosphate (EPSP) to yield chorismate, which is the branch point compound that serves as the starting substrate for the three terminal pathways of aromatic amino acid biosynthesis. This reaction introduces a second double bond into the aromatic ring system. The protein is Chorismate synthase of Trichodesmium erythraeum (strain IMS101).